The following is a 243-amino-acid chain: uncharacterized protein (243 aa).

The Bipartite nuclear localization signal motif lies at 207–224; it reads KKTSISGYKTLDVKRKFV.

This is an uncharacterized protein from Acheta domesticus (House cricket).